The following is a 286-amino-acid chain: Phosphate import ATP-binding protein PstB (286 aa).

In terms of domain architecture, ABC transporter spans I40–I281. G72–S79 serves as a coordination point for ATP.

It belongs to the ABC transporter superfamily. Phosphate importer (TC 3.A.1.7) family. As to quaternary structure, the complex is composed of two ATP-binding proteins (PstB), two transmembrane proteins (PstC and PstA) and a solute-binding protein (PstS).

It is found in the cell inner membrane. It catalyses the reaction phosphate(out) + ATP + H2O = ADP + 2 phosphate(in) + H(+). Part of the ABC transporter complex PstSACB involved in phosphate import. Responsible for energy coupling to the transport system. This chain is Phosphate import ATP-binding protein PstB, found in Granulibacter bethesdensis (strain ATCC BAA-1260 / CGDNIH1).